Consider the following 314-residue polypeptide: Aromatic prenyltransferase (314 aa).

Belongs to the aromatic prenyltransferase family.

Its function is as follows. Prenyltransferase that attaches isoprenoid moieties to carbon atoms of aromatic substrates in an enzyme-catalyzed Friedel-Crafts reaction. This chain is Aromatic prenyltransferase, found in Arthroderma otae (strain ATCC MYA-4605 / CBS 113480) (Microsporum canis).